The chain runs to 443 residues: Sperm-associated antigen 4 protein (443 aa).

Positions 1–36 are enriched in low complexity; sequence MRRSPRSGSAASSHNHTPNFYSENSNSSHSATSGDS. A disordered region spans residues 1–107; it reads MRRSPRSGSA…VRGGASEPSG (107 aa). 2 helical membrane-spanning segments follow: residues 137-157 and 168-188; these read FLSL…DGLV and FLFT…WGLL. Positions 203 to 244 form a coiled coil; it reads TLSQYHHRVHSQGQQLQQLQAELNKLHKEVSSVRAAHSERVA. The SUN domain maps to 267–427; it reads GASIDLEKTS…YRVRAHGVRT (161 aa).

Self-associates. Interacts with ODF1. May associate with microtubules. Interacts with SUN3 and SYNE1; suggesting the formation of a spermatogenesis-specific LINC complex; a SUN domain-based heterotrimer of SPAG4 and SUN3 may associate with SYNE1. Interacts with SEPT12 and LMNB1; during spermatogenesis. As to expression, isoform 1 is testis specific and is exclusively expressed in spermatids.

It is found in the membrane. Its subcellular location is the cytoplasm. The protein localises to the cytoskeleton. It localises to the nucleus envelope. The protein resides in the nucleus inner membrane. It is found in the flagellum axoneme. Functionally, involved in spermatogenesis. Required for sperm head formation but not required to establish and maintain general polarity of the sperm head. Required for anchoring and organization of the manchette. Required for targeting of SUN3 and probably SYNE1 through a probable SUN1:SYNE3 LINC complex to the nuclear envelope and involved in accurate posterior sperm head localization of the complex. May anchor SUN3 the nuclear envelope. Involved in maintenance of the nuclear envelope integrity. May assist the organization and assembly of outer dense fibers (ODFs), a specific structure of the sperm tail. This Mus musculus (Mouse) protein is Sperm-associated antigen 4 protein (Spag4).